The primary structure comprises 113 residues: Cell division protein FtsB (113 aa).

Topologically, residues 1–3 are cytoplasmic; it reads MRL. The helical transmembrane segment at 4–21 threads the bilayer; it reads ISLLLFVLLLAIQYPLWL. The Periplasmic portion of the chain corresponds to 22-113; the sequence is GKGGWLRVWD…PNSVAGRGGH (92 aa). A coiled-coil region spans residues 34-64; that stretch reads RQVNEQTVHNQALKLRNAKLEGEVKDLQDGT. The disordered stretch occupies residues 93–113; the sequence is KVSATPPLPPPPNSVAGRGGH.

It belongs to the FtsB family. Part of a complex composed of FtsB, FtsL and FtsQ.

The protein localises to the cell inner membrane. Essential cell division protein. May link together the upstream cell division proteins, which are predominantly cytoplasmic, with the downstream cell division proteins, which are predominantly periplasmic. This is Cell division protein FtsB from Cupriavidus metallidurans (strain ATCC 43123 / DSM 2839 / NBRC 102507 / CH34) (Ralstonia metallidurans).